The sequence spans 509 residues: Probable Xaa-Pro aminopeptidase MAC_04092 (509 aa).

The Mn(2+) site is built by D273, D284, E437, and E478.

The protein belongs to the peptidase M24B family. It depends on Mn(2+) as a cofactor.

The catalysed reaction is Release of any N-terminal amino acid, including proline, that is linked to proline, even from a dipeptide or tripeptide.. Catalyzes the removal of a penultimate prolyl residue from the N-termini of peptides. This chain is Probable Xaa-Pro aminopeptidase MAC_04092, found in Metarhizium acridum (strain CQMa 102).